A 147-amino-acid polypeptide reads, in one-letter code: 3-dehydroquinate dehydratase (147 aa).

Tyrosine 26 acts as the Proton acceptor in catalysis. 3 residues coordinate substrate: asparagine 77, histidine 83, and aspartate 90. Histidine 103 (proton donor) is an active-site residue. Substrate is bound by residues 104 to 105 and arginine 114; that span reads LS.

This sequence belongs to the type-II 3-dehydroquinase family. Homododecamer.

It catalyses the reaction 3-dehydroquinate = 3-dehydroshikimate + H2O. Its pathway is metabolic intermediate biosynthesis; chorismate biosynthesis; chorismate from D-erythrose 4-phosphate and phosphoenolpyruvate: step 3/7. In terms of biological role, catalyzes a trans-dehydration via an enolate intermediate. This chain is 3-dehydroquinate dehydratase, found in Proteus mirabilis (strain HI4320).